Consider the following 670-residue polypeptide: DNA ligase (670 aa).

Residues 33 to 37, 82 to 83, and glutamate 113 each bind NAD(+); these read DAEFD and SL. Lysine 115 acts as the N6-AMP-lysine intermediate in catalysis. NAD(+) is bound by residues arginine 136, glutamate 170, lysine 285, and lysine 309. Zn(2+)-binding residues include cysteine 403, cysteine 406, cysteine 421, and cysteine 427. The region spanning 587–670 is the BRCT domain; it reads EQNLYLSGKT…EVLKAGDNNG (84 aa).

It belongs to the NAD-dependent DNA ligase family. LigA subfamily. It depends on Mg(2+) as a cofactor. Mn(2+) is required as a cofactor.

The enzyme catalyses NAD(+) + (deoxyribonucleotide)n-3'-hydroxyl + 5'-phospho-(deoxyribonucleotide)m = (deoxyribonucleotide)n+m + AMP + beta-nicotinamide D-nucleotide.. Its function is as follows. DNA ligase that catalyzes the formation of phosphodiester linkages between 5'-phosphoryl and 3'-hydroxyl groups in double-stranded DNA using NAD as a coenzyme and as the energy source for the reaction. It is essential for DNA replication and repair of damaged DNA. This is DNA ligase from Halothermothrix orenii (strain H 168 / OCM 544 / DSM 9562).